A 470-amino-acid chain; its full sequence is Protein ASPARTIC PROTEASE IN GUARD CELL 2 (470 aa).

Positions 1-19 are cleaved as a signal peptide; it reads MLLPLFFFFLHLHLHLSSS. A Peptidase A1 domain is found at 131 to 466; it reads YFVRIGVGSP…DGANGFVGFG (336 aa). Aspartate 149 is an active-site residue. 6 disulfides stabilise this stretch: cysteine 159–cysteine 162, cysteine 165–cysteine 239, cysteine 186–cysteine 204, cysteine 191–cysteine 199, cysteine 278–cysteine 470, and cysteine 389–cysteine 431. Aspartate 350 is an active-site residue.

Belongs to the peptidase A1 family.

In terms of biological role, aspartic protease that may be involved in drought avoidance through abscisic acid signaling. The protein is Protein ASPARTIC PROTEASE IN GUARD CELL 2 (ASPG2) of Arabidopsis thaliana (Mouse-ear cress).